Here is a 316-residue protein sequence, read N- to C-terminus: MKPTVVSADVLFEDHRATLKWEWVAGLGASERRFDEVAVSEARSGADLVGYLNYIHPYRVQILGEREVAYLSHVGPEDSARRISRIITLEPPVLVVADGQTAPDTLLSMCERAQLPMFATPESAAFVIDVLRAYLSRHFAERTSMHGVFMDILGMGVMITGESGLGKSELGLELISRGHGLVADDAIDLFRINQTAIEGRCPDLLQNLLEVRGIGLLDIKAIFGETAVRRKMRLKMIVHLVRRETLERDYERIPYEPLTQDVLGVPVRKVIIQVEAGRNIAVLVEAAVRNAILQLRGINTYQEFVERHRRAMEQDD.

Residues His-146 and Lys-167 contribute to the active site. Position 161-168 (161-168 (GESGLGKS)) interacts with ATP. Position 168 (Ser-168) interacts with Mg(2+). Asp-185 (proton acceptor; for phosphorylation activity. Proton donor; for dephosphorylation activity) is an active-site residue. The tract at residues 209-218 (LEVRGIGLLD) is important for the catalytic mechanism of both phosphorylation and dephosphorylation. Glu-210 contacts Mg(2+). Residue Arg-252 is part of the active site. The segment at 273 to 278 (QVEAGR) is important for the catalytic mechanism of dephosphorylation.

The protein belongs to the HPrK/P family. In terms of assembly, homohexamer. Mg(2+) serves as cofactor.

The catalysed reaction is [HPr protein]-L-serine + ATP = [HPr protein]-O-phospho-L-serine + ADP + H(+). It carries out the reaction [HPr protein]-O-phospho-L-serine + phosphate + H(+) = [HPr protein]-L-serine + diphosphate. Its function is as follows. Catalyzes the ATP- as well as the pyrophosphate-dependent phosphorylation of a specific serine residue in HPr, a phosphocarrier protein of the phosphoenolpyruvate-dependent sugar phosphotransferase system (PTS). HprK/P also catalyzes the pyrophosphate-producing, inorganic phosphate-dependent dephosphorylation (phosphorolysis) of seryl-phosphorylated HPr (P-Ser-HPr). This is HPr kinase/phosphorylase from Polaromonas naphthalenivorans (strain CJ2).